Here is a 459-residue protein sequence, read N- to C-terminus: MFRGKVRHIHFIGIGGSGMNGIAQVLLNQGFTVTGSDLKESQTVINLKNMGAKIYIGHDPKNVDGADVVVYSSAVKQDNPELLRAKQLGIPTIPRGEMLAELMRFKYGIAIAGSHGKTTTTSMVGTILGKTGYDPTVVIGGKLEAYGSNAKLGSGDFIVTEADESDGSFLKLTPTIVSINNIDLEHIGFYKNLNDIKRAFIDFANKVPFYGAVAVNIDDQNIKDIIPEIEKKIIRFGISEDSDIRGYDLRLENGRYRFKVNDFGEIYLSIPGKHNVYNALAAISISVELGVPFCVIKEALENFKNANRRFEIKYDGSVTVIDDYAHHPTEIKATLSATREMFDGRRIIAVFQPHRYSRTFSLYDHFVRSFNIPDITVITEIFPAGESPIDSVNGEKLSSDIKKETGKTVLYGEDLQKTFNILKNILKKDDVLLILGAGNVTRLSDQISQFLKNKEGALR.

113-119 (GSHGKTT) serves as a coordination point for ATP.

It belongs to the MurCDEF family.

It localises to the cytoplasm. It carries out the reaction UDP-N-acetyl-alpha-D-muramate + L-alanine + ATP = UDP-N-acetyl-alpha-D-muramoyl-L-alanine + ADP + phosphate + H(+). It participates in cell wall biogenesis; peptidoglycan biosynthesis. Cell wall formation. The chain is UDP-N-acetylmuramate--L-alanine ligase from Persephonella marina (strain DSM 14350 / EX-H1).